A 171-amino-acid chain; its full sequence is Putative defense protein (171 aa).

The N-terminal stretch at 1-23 is a signal peptide; sequence MKVYACLCAAVVMLVMTSRVSEA. The 148-residue stretch at 24–171 folds into the Reelin domain; sequence RSTGAPLSAC…VQSAPIKIVS (148 aa). Cysteines 33 and 110 form a disulfide. Asn-41 carries an N-linked (GlcNAc...) asparagine glycan.

It belongs to the insect defense protein family.

Its subcellular location is the secreted. May have antimicrobial activity. This Bombyx mori (Silk moth) protein is Putative defense protein.